Consider the following 77-residue polypeptide: Putative defensin-like protein 162 (77 aa).

The N-terminal stretch at 1 to 27 is a signal peptide; sequence MAKQLCSYMFISMFILSAFLALPSAEG. 4 disulfide bridges follow: C34-C77, C44-C63, C49-C71, and C53-C73.

This sequence belongs to the DEFL family.

The protein resides in the secreted. The polypeptide is Putative defensin-like protein 162 (LCR37) (Arabidopsis thaliana (Mouse-ear cress)).